The sequence spans 394 residues: Guanine nucleotide-binding protein G(s) subunit alpha (394 aa).

Residues 1–23 (MGCLGNSKTEDQRNEEKAQREAN) form a disordered region. A lipid anchor (N-palmitoyl glycine) is attached at Gly2. Cys3 carries the S-palmitoyl cysteine lipid modification. The segment covering 8–23 (KTEDQRNEEKAQREAN) has biased composition (basic and acidic residues). The region spanning 39–394 (ATHRLLLLGA…RMHLRQYELL (356 aa)) is the G-alpha domain. The interval 42–55 (RLLLLGAGESGKST) is G1 motif. Residue 47 to 55 (GAGESGKST) participates in GTP binding. Mg(2+) is bound at residue Ser54. The disordered stretch occupies residues 68–90 (FNGEGGEEDPQAARSNSDGEKAT). Positions 196-204 (DLLRCRVLT) are G2 motif. GTP-binding positions include 197-204 (LLRCRVLT), 223-227 (DVGGQ), 292-295 (NKQD), and Ala366. Residue Thr204 coordinates Mg(2+). Residues 219-228 (FHMFDVGGQR) form a G3 motif region. Residues 288–295 (ILFLNKQD) are G4 motif. The segment at 364 to 369 (TCAVDT) is G5 motif.

It belongs to the G-alpha family. G(s) subfamily. Heterotrimeric G proteins are composed of 3 units; alpha, beta and gamma. The alpha chain contains the guanine nucleotide binding site. Interacts with CRY1; the interaction may block GPCR-mediated regulation of cAMP concentrations. Interacts with ADCY6 and stimulates its adenylyl cyclase activity. Interacts with ADCY2 and ADCY5. Stimulates the ADCY5 adenylyl cyclase activity. Interaction with SASH1.

The protein resides in the cell membrane. In terms of biological role, guanine nucleotide-binding proteins (G proteins) function as transducers in numerous signaling pathways controlled by G protein-coupled receptors (GPCRs). Signaling involves the activation of adenylyl cyclases, resulting in increased levels of the signaling molecule cAMP. GNAS functions downstream of several GPCRs, including beta-adrenergic receptors. Stimulates the Ras signaling pathway via RAPGEF2. In Cricetulus griseus (Chinese hamster), this protein is Guanine nucleotide-binding protein G(s) subunit alpha (GNAS).